The sequence spans 239 residues: Protein GrpE (239 aa).

Disordered regions lie at residues 1–50 (MIEN…INTE) and 209–239 (MGHG…SEDV). Positions 16–30 (VLNQDNAPEDNSSAA) are enriched in polar residues. The segment covering 218-239 (EEVEKDTVEEDIDSEENTSEDV) has biased composition (acidic residues).

It belongs to the GrpE family. As to quaternary structure, homodimer.

The protein resides in the cytoplasm. Participates actively in the response to hyperosmotic and heat shock by preventing the aggregation of stress-denatured proteins, in association with DnaK and GrpE. It is the nucleotide exchange factor for DnaK and may function as a thermosensor. Unfolded proteins bind initially to DnaJ; upon interaction with the DnaJ-bound protein, DnaK hydrolyzes its bound ATP, resulting in the formation of a stable complex. GrpE releases ADP from DnaK; ATP binding to DnaK triggers the release of the substrate protein, thus completing the reaction cycle. Several rounds of ATP-dependent interactions between DnaJ, DnaK and GrpE are required for fully efficient folding. This Prochlorococcus marinus (strain MIT 9312) protein is Protein GrpE.